A 1595-amino-acid chain; its full sequence is Pentafunctional AROM polypeptide (1595 aa).

The tract at residues 1-384 is 3-dehydroquinate synthase; it reads MGVPTKISIL…HEPRASTVSN (384 aa). NAD(+) is bound by residues 44–46, 81–84, 114–116, and D119; these read DTN, ESSK, and GGV. A 7-phospho-2-dehydro-3-deoxy-D-arabino-heptonate-binding site is contributed by R130. 139-140 serves as a coordination point for NAD(+); the sequence is TT. Positions 146 and 152 each coordinate 7-phospho-2-dehydro-3-deoxy-D-arabino-heptonate. K161 is a binding site for NAD(+). N162 is a binding site for 7-phospho-2-dehydro-3-deoxy-D-arabino-heptonate. NAD(+) contacts are provided by residues 179–182 and N190; that span reads FLNT. A Zn(2+)-binding site is contributed by E194. 7-phospho-2-dehydro-3-deoxy-D-arabino-heptonate is bound by residues 194–197 and K250; that span reads EVIK. E260 acts as the Proton acceptor; for 3-dehydroquinate synthase activity in catalysis. Residues 264-268 and H271 each bind 7-phospho-2-dehydro-3-deoxy-D-arabino-heptonate; that span reads RNLLN. Residue H271 coordinates Zn(2+). H275 serves as the catalytic Proton acceptor; for 3-dehydroquinate synthase activity. 7-phospho-2-dehydro-3-deoxy-D-arabino-heptonate-binding residues include H287 and K356. Position 287 (H287) interacts with Zn(2+). The tract at residues 397–842 is EPSP synthase; it reads VSPGVPKGLD…WDSLAQTFKV (446 aa). The For EPSP synthase activity role is filled by C824. A shikimate kinase region spans residues 866-1057; the sequence is ASIFIIGMRG…RRKENTFFVS (192 aa). 872 to 879 provides a ligand contact to ATP; it reads GMRGAGKT. Positions 1058 to 1278 are 3-dehydroquinase; it reads LTLPDLSLAA…AAPGQLSARE (221 aa). Catalysis depends on H1181, which acts as the Proton acceptor; for 3-dehydroquinate dehydratase activity. K1209 serves as the catalytic Schiff-base intermediate with substrate; for 3-dehydroquinate dehydratase activity. The segment at 1291 to 1595 is shikimate dehydrogenase; that stretch reads AKKFAVIGNP…MGVSPSEDIL (305 aa).

In the N-terminal section; belongs to the sugar phosphate cyclases superfamily. Dehydroquinate synthase family. It in the 2nd section; belongs to the EPSP synthase family. The protein in the 3rd section; belongs to the shikimate kinase family. This sequence in the 4th section; belongs to the type-I 3-dehydroquinase family. In the C-terminal section; belongs to the shikimate dehydrogenase family. Homodimer. Zn(2+) serves as cofactor.

The protein localises to the cytoplasm. It carries out the reaction 7-phospho-2-dehydro-3-deoxy-D-arabino-heptonate = 3-dehydroquinate + phosphate. The enzyme catalyses 3-dehydroquinate = 3-dehydroshikimate + H2O. It catalyses the reaction shikimate + NADP(+) = 3-dehydroshikimate + NADPH + H(+). The catalysed reaction is shikimate + ATP = 3-phosphoshikimate + ADP + H(+). It carries out the reaction 3-phosphoshikimate + phosphoenolpyruvate = 5-O-(1-carboxyvinyl)-3-phosphoshikimate + phosphate. Its pathway is metabolic intermediate biosynthesis; chorismate biosynthesis; chorismate from D-erythrose 4-phosphate and phosphoenolpyruvate: step 2/7. It participates in metabolic intermediate biosynthesis; chorismate biosynthesis; chorismate from D-erythrose 4-phosphate and phosphoenolpyruvate: step 3/7. It functions in the pathway metabolic intermediate biosynthesis; chorismate biosynthesis; chorismate from D-erythrose 4-phosphate and phosphoenolpyruvate: step 4/7. The protein operates within metabolic intermediate biosynthesis; chorismate biosynthesis; chorismate from D-erythrose 4-phosphate and phosphoenolpyruvate: step 5/7. Its pathway is metabolic intermediate biosynthesis; chorismate biosynthesis; chorismate from D-erythrose 4-phosphate and phosphoenolpyruvate: step 6/7. The AROM polypeptide catalyzes 5 consecutive enzymatic reactions in prechorismate polyaromatic amino acid biosynthesis. In Ajellomyces capsulatus (strain G186AR / H82 / ATCC MYA-2454 / RMSCC 2432) (Darling's disease fungus), this protein is Pentafunctional AROM polypeptide.